Reading from the N-terminus, the 119-residue chain is Ribonuclease P protein component (119 aa).

Belongs to the RnpA family. Consists of a catalytic RNA component (M1 or rnpB) and a protein subunit.

The catalysed reaction is Endonucleolytic cleavage of RNA, removing 5'-extranucleotides from tRNA precursor.. Functionally, RNaseP catalyzes the removal of the 5'-leader sequence from pre-tRNA to produce the mature 5'-terminus. It can also cleave other RNA substrates such as 4.5S RNA. The protein component plays an auxiliary but essential role in vivo by binding to the 5'-leader sequence and broadening the substrate specificity of the ribozyme. The protein is Ribonuclease P protein component of Corynebacterium diphtheriae (strain ATCC 700971 / NCTC 13129 / Biotype gravis).